Consider the following 267-residue polypeptide: Heme-containing CO-sensing transcriptional regulator RcoM 1 (267 aa).

A PAS domain is found at 15-86; sequence RAETFQHKLE…KSRDKLRFLL (72 aa). Heme contacts are provided by His74 and Met104. The HTH LytTR-type domain maps to 161–266; sequence IPVYRKNRVI…TAQLKELLGV (106 aa).

Heme serves as cofactor.

It localises to the cytoplasm. Its function is as follows. One-component, b-type heme-containing aerobic sensor and transcriptional regulator that responds to CO by activating the expression of the oxidation operon cox. This chain is Heme-containing CO-sensing transcriptional regulator RcoM 1 (rcoM1), found in Paraburkholderia xenovorans (strain LB400).